The chain runs to 299 residues: Ribonuclease H2 subunit A (299 aa).

The residue at position 1 (M1) is an N-acetylmethionine. An RNase H type-2 domain is found at 28-251 (PCVLGVDEAG…AQSILESEAE (224 aa)). A divalent metal cation is bound by residues D34, E35, and D142. Phosphothreonine occurs at positions 205 and 217. Positions 250–272 (AEDVKWEDSETGDPKGPGKIKSY) are disordered. S258 bears the Phosphoserine mark.

Belongs to the RNase HII family. Eukaryotic subfamily. The RNase H2 complex is a heterotrimer composed of the catalytic subunit RNASEH2A and the non-catalytic subunits RNASEH2B and RNASEH2C. Mn(2+) is required as a cofactor. The cofactor is Mg(2+).

The protein localises to the nucleus. It catalyses the reaction Endonucleolytic cleavage to 5'-phosphomonoester.. Functionally, catalytic subunit of RNase HII, an endonuclease that specifically degrades the RNA of RNA:DNA hybrids. Participates in DNA replication, possibly by mediating the removal of lagging-strand Okazaki fragment RNA primers during DNA replication. Mediates the excision of single ribonucleotides from DNA:RNA duplexes. This chain is Ribonuclease H2 subunit A (RNASEH2A), found in Bos taurus (Bovine).